We begin with the raw amino-acid sequence, 179 residues long: Inorganic pyrophosphatase (179 aa).

Residues Lys-30, Arg-44, and Tyr-56 each coordinate substrate. The Mg(2+) site is built by Asp-66, Asp-71, and Asp-103. Tyr-142 is a substrate binding site.

It belongs to the PPase family. Homohexamer. Mg(2+) is required as a cofactor.

It localises to the cytoplasm. The catalysed reaction is diphosphate + H2O = 2 phosphate + H(+). Functionally, catalyzes the hydrolysis of inorganic pyrophosphate (PPi) forming two phosphate ions. The chain is Inorganic pyrophosphatase from Rhodospirillum rubrum (strain ATCC 11170 / ATH 1.1.1 / DSM 467 / LMG 4362 / NCIMB 8255 / S1).